Here is a 59-residue protein sequence, read N- to C-terminus: Large ribosomal subunit protein bL32 (59 aa).

Residues 1–19 show a composition bias toward basic residues; that stretch reads MPVPKRRMSRSNTRSRRAQ. The disordered stretch occupies residues 1–20; the sequence is MPVPKRRMSRSNTRSRRAQW.

This sequence belongs to the bacterial ribosomal protein bL32 family.

The sequence is that of Large ribosomal subunit protein bL32 from Acidothermus cellulolyticus (strain ATCC 43068 / DSM 8971 / 11B).